The following is a 216-amino-acid chain: uncharacterized protein (216 aa).

4Fe-4S ferredoxin-type domains lie at 160 to 189 (DDKP…IDEK) and 188 to 216 (EKPK…ALLP). Residues Cys169, Cys172, Cys175, Cys179, Cys197, Cys200, Cys203, and Cys207 each contribute to the [4Fe-4S] cluster site.

The protein belongs to the FrhG family.

This is an uncharacterized protein from Methanocaldococcus jannaschii (strain ATCC 43067 / DSM 2661 / JAL-1 / JCM 10045 / NBRC 100440) (Methanococcus jannaschii).